Here is a 494-residue protein sequence, read N- to C-terminus: NAD(P)H-quinone oxidoreductase subunit 2 B, chloroplastic (494 aa).

13 helical membrane-spanning segments follow: residues Leu-6–Leu-26, Thr-39–Phe-59, Ile-81–Ile-101, Met-106–Cys-126, Leu-131–Tyr-151, Leu-166–Leu-186, Ile-211–Phe-231, Trp-277–Ile-297, Met-305–Asp-325, Tyr-336–Leu-356, Ala-377–Phe-397, Leu-413–Ile-433, and Met-468–Ile-488.

This sequence belongs to the complex I subunit 2 family. As to quaternary structure, NDH is composed of at least 16 different subunits, 5 of which are encoded in the nucleus.

Its subcellular location is the plastid. It is found in the chloroplast thylakoid membrane. It catalyses the reaction a plastoquinone + NADH + (n+1) H(+)(in) = a plastoquinol + NAD(+) + n H(+)(out). The catalysed reaction is a plastoquinone + NADPH + (n+1) H(+)(in) = a plastoquinol + NADP(+) + n H(+)(out). In terms of biological role, NDH shuttles electrons from NAD(P)H:plastoquinone, via FMN and iron-sulfur (Fe-S) centers, to quinones in the photosynthetic chain and possibly in a chloroplast respiratory chain. The immediate electron acceptor for the enzyme in this species is believed to be plastoquinone. Couples the redox reaction to proton translocation, and thus conserves the redox energy in a proton gradient. The protein is NAD(P)H-quinone oxidoreductase subunit 2 B, chloroplastic of Cycas taitungensis (Prince sago).